Here is a 136-residue protein sequence, read N- to C-terminus: MMPLSRSRLEFIATILQNVLNLGLLTLGLILVVFLGKETVHLADALFVPEQASKYELVEGLVIYFLYFEFIALIVKYFKSGLHFPLRYFVYIGITAIVRLIIVDHKTPMDVLLYSAAILLLVITLWLCNSNRLRRE.

The next 4 membrane-spanning stretches (helical) occupy residues 15 to 35 (ILQNVLNLGLLTLGLILVVFL), 55 to 75 (YELVEGLVIYFLYFEFIALIV), 83 to 103 (HFPLRYFVYIGITAIVRLIIV), and 108 to 128 (PMDVLLYSAAILLLVITLWLC).

The protein belongs to the PsiE family.

The protein localises to the cell inner membrane. This chain is Protein PsiE, found in Salmonella agona (strain SL483).